A 338-amino-acid chain; its full sequence is 3-dehydroquinate synthase (338 aa).

NAD(+) contacts are provided by residues 58 to 63 (DGERAK), 92 to 96 (GTTGD), 116 to 117 (TT), Lys129, and Lys138. Zn(2+)-binding residues include Glu169, His229, and His245.

This sequence belongs to the sugar phosphate cyclases superfamily. Dehydroquinate synthase family. NAD(+) serves as cofactor. Requires Co(2+) as cofactor. Zn(2+) is required as a cofactor.

Its subcellular location is the cytoplasm. It carries out the reaction 7-phospho-2-dehydro-3-deoxy-D-arabino-heptonate = 3-dehydroquinate + phosphate. It participates in metabolic intermediate biosynthesis; chorismate biosynthesis; chorismate from D-erythrose 4-phosphate and phosphoenolpyruvate: step 2/7. Functionally, catalyzes the conversion of 3-deoxy-D-arabino-heptulosonate 7-phosphate (DAHP) to dehydroquinate (DHQ). In Picrophilus torridus (strain ATCC 700027 / DSM 9790 / JCM 10055 / NBRC 100828 / KAW 2/3), this protein is 3-dehydroquinate synthase.